A 49-amino-acid polypeptide reads, in one-letter code: Large ribosomal subunit protein bL33A (49 aa).

This sequence belongs to the bacterial ribosomal protein bL33 family.

The sequence is that of Large ribosomal subunit protein bL33A from Staphylococcus saprophyticus subsp. saprophyticus (strain ATCC 15305 / DSM 20229 / NCIMB 8711 / NCTC 7292 / S-41).